Reading from the N-terminus, the 414-residue chain is Testis-specific Y-encoded-like protein 4 (414 aa).

2 disordered regions span residues 1–129 (MSGL…AGQK) and 391–414 (PRRG…FQSG). Over residues 24–40 (ASGDPDRDQCQGLREET) the composition is skewed to basic and acidic residues. The segment covering 101 to 112 (EAASAAEAADSS) has biased composition (low complexity).

This sequence belongs to the nucleosome assembly protein (NAP) family.

This chain is Testis-specific Y-encoded-like protein 4 (TSPYL4), found in Homo sapiens (Human).